The primary structure comprises 423 residues: MQKAGAGGRRASDCGLAPHRPRCITKFAQYVGLLPCGRPGHPGERVAGAAAAVGAEDCPRRRAVILKFSLQGLKIYSGEGEVLLMAHALRRILYSTWCPADCQFAFVARNPRSPASKFFCHLFVGSQPGEVQILHLLLCRSFQLAYLLQHPEERAQPEPCPGPTGEVPLKPLSSSGGLVREPFGRDQLSQNVHALVSFRRLPAEGLVGSGKELPESEGRARHARLGNPYCSPTLVRKKAIRSKVIRSGAYRGCTYETQLQLSAREAFPAAWEAWPRGPGGHSCLVESEGSLTENIWAFAGISRPCALALLRRDVLGAFLLWPELGASGQWCLSVRTQCGVVPHQVFRNHLGRYCLEHLPAEFPSLEALVENHAVTERSLFCPLDMGRLNPTYEEQDCGPLGRPPRTLRPLSHAKSEAELQGLG.

The PID domain maps to 28–146 (AQYVGLLPCG…LLCRSFQLAY (119 aa)). The SH2 domain occupies 296–392 (WAFAGISRPC…LDMGRLNPTY (97 aa)). The tract at residues 394–423 (EQDCGPLGRPPRTLRPLSHAKSEAELQGLG) is disordered. A compositionally biased stretch (low complexity) spans 398-410 (GPLGRPPRTLRPL).

In terms of assembly, interacts with BCR.

The protein localises to the postsynaptic density. In terms of biological role, may be involved in synaptic plasticity regulation through the control of Rac-GTP levels. This is SH2 domain-containing protein 5 from Pongo abelii (Sumatran orangutan).